We begin with the raw amino-acid sequence, 115 residues long: MNFKKTVVSALSISALALSVSGVASAHEINSTPTEVKNISISPTHVIKIQDYNLPLKVGETYSVKNNSATRYWTDNQKVAEVDQNGLVTAKSKGKATITLFKGTAVFGKVYVTVY.

The first 26 residues, 1-26 (MNFKKTVVSALSISALALSVSGVASA), serve as a signal peptide directing secretion. Residues 36–114 (VKNISISPTH…AVFGKVYVTV (79 aa)) enclose the BIG2 domain.

This is an uncharacterized protein from Bacillus subtilis (strain 168).